The following is an 84-amino-acid chain: Small ribosomal subunit protein bS16c (84 aa).

Belongs to the bacterial ribosomal protein bS16 family.

The protein localises to the plastid. It is found in the chloroplast. In Mesostigma viride (Green alga), this protein is Small ribosomal subunit protein bS16c.